The sequence spans 436 residues: Alpha-2 adrenergic receptor (436 aa).

At 1 to 27 the chain is on the extracellular side; that stretch reads MDVTQSNATKDDANITVTPWPYTETAA. Asparagine 7 and asparagine 14 each carry an N-linked (GlcNAc...) asparagine glycan. A helical transmembrane segment spans residues 28-52; it reads AFIILVVSVIILVSIVGNVLVIVAV. The Cytoplasmic portion of the chain corresponds to 53 to 64; it reads LTSRALRAPQNL. A helical membrane pass occupies residues 65–90; that stretch reads FLVSLACADILVATLVIPFSLANEIM. The Extracellular portion of the chain corresponds to 91–100; the sequence is GYWFFGSTWC. A disulfide bridge connects residues cysteine 100 and cysteine 173. Residues 101-123 traverse the membrane as a helical segment; the sequence is AFYLALDVLFCTSSIVHLCAISL. Residues 124–144 are Cytoplasmic-facing; the sequence is DRYWSVTKAVSYNLKRTPKRI. Residues 145 to 167 form a helical membrane-spanning segment; it reads KSMIAVVWVISAVISFPPLIMTK. Residues 168–178 are Extracellular-facing; it reads HDEKECLINDE. The chain crosses the membrane as a helical span at residues 179 to 202; that stretch reads TWYILSSSLVSFFAPGFIMITVYC. At 203–329 the chain is on the cytoplasmic side; sequence KIYRVAKQRS…QMREKRFTFV (127 aa). Positions 238 to 280 are disordered; sequence KFEKESPSSNSSESNQRQEELDDIDLEESATSDNKPKSSRFSN. The span at 257–267 shows a compositional bias: acidic residues; sequence ELDDIDLEESA. The chain crosses the membrane as a helical span at residues 330-353; the sequence is LTVVMGVFVLCWFPFFFTYSLHAI. The Extracellular segment spans residues 354–366; that stretch reads CGDSCEPPEALFK. Residues 367 to 387 form a helical membrane-spanning segment; it reads LFFWIGYCNSSVNPIIYTIFN. The Cytoplasmic portion of the chain corresponds to 388 to 436; it reads RDFRKAFKKICLLDCAAHLRDSCLGTLGRLNAKCIFECHQKSNQEETAN.

Belongs to the G-protein coupled receptor 1 family.

The protein localises to the cell membrane. Its function is as follows. Alpha-2 adrenergic receptors mediate the catecholamine-induced inhibition of adenylate cyclase through the action of G proteins. The polypeptide is Alpha-2 adrenergic receptor (Carassius auratus (Goldfish)).